The chain runs to 143 residues: Nucleoside diphosphate kinase (143 aa).

6 residues coordinate ATP: K11, F59, R87, T93, R104, and N114. The active-site Pros-phosphohistidine intermediate is H117.

Belongs to the NDK family. As to quaternary structure, homotetramer. Mg(2+) serves as cofactor.

The protein resides in the cytoplasm. The catalysed reaction is a 2'-deoxyribonucleoside 5'-diphosphate + ATP = a 2'-deoxyribonucleoside 5'-triphosphate + ADP. It carries out the reaction a ribonucleoside 5'-diphosphate + ATP = a ribonucleoside 5'-triphosphate + ADP. In terms of biological role, major role in the synthesis of nucleoside triphosphates other than ATP. The ATP gamma phosphate is transferred to the NDP beta phosphate via a ping-pong mechanism, using a phosphorylated active-site intermediate. The protein is Nucleoside diphosphate kinase of Shewanella oneidensis (strain ATCC 700550 / JCM 31522 / CIP 106686 / LMG 19005 / NCIMB 14063 / MR-1).